Reading from the N-terminus, the 305-residue chain is Ribonuclease BN (305 aa).

Histidine 64, histidine 66, aspartate 68, histidine 69, histidine 141, aspartate 212, and histidine 270 together coordinate Zn(2+). Aspartate 68 (proton acceptor) is an active-site residue.

This sequence belongs to the RNase Z family. RNase BN subfamily. In terms of assembly, homodimer. Requires Zn(2+) as cofactor.

Zinc phosphodiesterase, which has both exoribonuclease and endoribonuclease activities. The sequence is that of Ribonuclease BN from Escherichia coli O157:H7.